Here is a 340-residue protein sequence, read N- to C-terminus: MSSKLVNSLRLTFLSFLGIVSTSLDAMPAGNPAFPVIPGINVEQKSACAFDLCNSYDVLSALSGNLKLCFCGDYIFSEEAQVKDVPVVTSVTTSGVGPSPTITSTTKNRNFDLVDCSLSANCVAAAFSLPDRTMSAIPLFDASFEVKIGGLKQYYRLPMNAYRDFTSDPLNSESEVTDGLIEVQSNYGFVWDVSLKKVLWKDGVSFVGVGVDYRHASCPIDYIIANSQANPEVFIADSDGKLSLKEWSVCLGLTTYVNDYILPYVAFSVGNVSREAPDNSFKKLEERFTNLKFKVRKITSSHRGNICIGATNYIADNFFYNVEGRWGSQRAVNISGGFQF.

A signal peptide spans 1-26 (MSSKLVNSLRLTFLSFLGIVSTSLDA).

Belongs to the chlamydial OMP family.

It localises to the cell outer membrane. The polypeptide is Outer membrane protein B (ompB) (Chlamydia muridarum (strain MoPn / Nigg)).